The primary structure comprises 314 residues: tRNA dimethylallyltransferase (314 aa).

6 to 13 (GPTAVGKT) is a binding site for ATP. Residue 8-13 (TAVGKT) coordinates substrate. The interaction with substrate tRNA stretch occupies residues 31 to 34 (DSRQ).

The protein belongs to the IPP transferase family. Monomer. The cofactor is Mg(2+).

The enzyme catalyses adenosine(37) in tRNA + dimethylallyl diphosphate = N(6)-dimethylallyladenosine(37) in tRNA + diphosphate. Its function is as follows. Catalyzes the transfer of a dimethylallyl group onto the adenine at position 37 in tRNAs that read codons beginning with uridine, leading to the formation of N6-(dimethylallyl)adenosine (i(6)A). The protein is tRNA dimethylallyltransferase of Pseudothermotoga lettingae (strain ATCC BAA-301 / DSM 14385 / NBRC 107922 / TMO) (Thermotoga lettingae).